Here is an 84-residue protein sequence, read N- to C-terminus: MPYSRDITKFITATEPEVGLPLLALQHSKSVIGVILLVISLLFIFIGIIILSVSSGHTTAASIFIVLSLILGGGGFFLIYKDNS.

Helical transmembrane passes span 31 to 51 and 60 to 80; these read VIGVILLVISLLFIFIGIIIL and AASIFIVLSLILGGGGFFLIY.

The protein belongs to the asfivirus EP84R family.

The protein localises to the virion membrane. This Ornithodoros (relapsing fever ticks) protein is Transmembrane protein EP84R.